We begin with the raw amino-acid sequence, 100 residues long: Secreted protein of Ly-6 domain 1 (100 aa).

Positions 1 to 22 (MAKCLLLLLLVVLSSLLGLPQA) are cleaved as a signal peptide. Residues 23-100 (LECFQCNRVN…CHDSPLCNKF (78 aa)) form the UPAR/Ly6 domain. Intrachain disulfides connect cysteine 25–cysteine 52, cysteine 28–cysteine 37, cysteine 44–cysteine 70, cysteine 74–cysteine 90, and cysteine 91–cysteine 97. The N-linked (GlcNAc...) asparagine glycan is linked to asparagine 60.

In terms of processing, glycosylated. As to expression, expressed in placenta, where it is detected in both fetal tissues (cotyledon and intercotyledon) and maternal tissues (caruncle and intercaruncular endometrium) (at protein level). Expressed in the mesenchyme area of villi in the cotyledon (at protein level). In endometrium, expressed in the luminal epithelium and weakly in the subluminal stroma (at protein level). Detected in trophoblast mononucleate cells (TMCs) (at protein level). Also detected in trophoblast binucleate cells (BNCs). Overall, expression is strongest in fetal tissue and lower in maternal tissue. Not detected in other tissues tested.

It is found in the secreted. Functionally, binds specifically to type I collagen. The protein is Secreted protein of Ly-6 domain 1 of Bos taurus (Bovine).